We begin with the raw amino-acid sequence, 66 residues long: Large ribosomal subunit protein bL35 (66 aa).

2 stretches are compositionally biased toward basic residues: residues 1–16 (MPKFKTHRASAKRFKK) and 23–45 (KRGHAYTSHRFHGKTKKQRRQLR). Positions 1 to 66 (MPKFKTHRAS…RIRQMLSQMK (66 aa)) are disordered.

This sequence belongs to the bacterial ribosomal protein bL35 family.

This is Large ribosomal subunit protein bL35 from Lacticaseibacillus casei (strain BL23) (Lactobacillus casei).